Consider the following 1035-residue polypeptide: Alpha-mannosidase B (1035 aa).

Positions 1 to 20 are cleaved as a signal peptide; that stretch reads MGKVLILFLFVLLLITFINC. N-linked (GlcNAc...) asparagine glycans are attached at residues asparagine 19 and asparagine 30. Zn(2+) contacts are provided by histidine 47 and aspartate 49. The N-linked (GlcNAc...) asparagine glycan is linked to asparagine 63. Aspartate 161 serves as a coordination point for Zn(2+). Residue aspartate 161 is the Nucleophile of the active site. N-linked (GlcNAc...) asparagine glycans are attached at residues asparagine 245, asparagine 250, asparagine 270, asparagine 309, asparagine 327, and asparagine 438. Histidine 446 is a binding site for Zn(2+). Residues asparagine 487, asparagine 497, asparagine 503, asparagine 710, asparagine 719, asparagine 735, asparagine 792, asparagine 852, asparagine 863, asparagine 880, asparagine 962, and asparagine 993 are each glycosylated (N-linked (GlcNAc...) asparagine).

This sequence belongs to the glycosyl hydrolase 38 family. Requires Zn(2+) as cofactor.

It is found in the secreted. The catalysed reaction is Hydrolysis of terminal, non-reducing alpha-D-mannose residues in alpha-D-mannosides.. The chain is Alpha-mannosidase B (manB) from Dictyostelium discoideum (Social amoeba).